We begin with the raw amino-acid sequence, 344 residues long: L-rhamnose-proton symporter (344 aa).

10 helical membrane passes run 4–24, 38–58, 68–88, 101–121, 137–157, 175–195, 214–234, 259–279, 290–310, and 323–343; these read AITM…CFYA, WSVG…ALLL, FSLS…IGNI, MGIG…TPII, TLLG…AGQL, LVLA…MNAA, LPSY…FCFI, VLLS…YAWG, ISWM…GLVL, and VLSL…IGMA.

Belongs to the L-rhamnose transporter (TC 2.A.7.6) family.

It is found in the cell inner membrane. It catalyses the reaction L-rhamnopyranose(in) + H(+)(in) = L-rhamnopyranose(out) + H(+)(out). In terms of biological role, uptake of L-rhamnose across the cytoplasmic membrane with the concomitant transport of protons into the cell (symport system). The protein is L-rhamnose-proton symporter of Shigella sonnei (strain Ss046).